Consider the following 322-residue polypeptide: Probable cAMP-dependent protein kinase catalytic subunit (322 aa).

One can recognise a Protein kinase domain in the interval 7–261 (FEFVKVVGVG…ICEIMGHPFF (255 aa)). ATP contacts are provided by residues 13 to 21 (VGVGAFGKV) and Lys-37. Asp-132 (proton acceptor) is an active-site residue. In terms of domain architecture, AGC-kinase C-terminal spans 262–322 (KGIDWHEVES…KHLYKVSKGL (61 aa)).

This sequence belongs to the protein kinase superfamily. AGC Ser/Thr protein kinase family. cAMP subfamily.

The catalysed reaction is L-seryl-[protein] + ATP = O-phospho-L-seryl-[protein] + ADP + H(+). It catalyses the reaction L-threonyl-[protein] + ATP = O-phospho-L-threonyl-[protein] + ADP + H(+). The polypeptide is Probable cAMP-dependent protein kinase catalytic subunit (Encephalitozoon cuniculi (strain GB-M1) (Microsporidian parasite)).